A 397-amino-acid chain; its full sequence is Glutamyl-tRNA reductase (397 aa).

Substrate contacts are provided by residues 47 to 50 (TCGR), S98, 103 to 105 (ETD), and Q109. C48 (nucleophile) is an active-site residue. Position 177 to 182 (177 to 182 (GAGAVG)) interacts with NADP(+).

It belongs to the glutamyl-tRNA reductase family. As to quaternary structure, homodimer.

The catalysed reaction is (S)-4-amino-5-oxopentanoate + tRNA(Glu) + NADP(+) = L-glutamyl-tRNA(Glu) + NADPH + H(+). Its pathway is porphyrin-containing compound metabolism; protoporphyrin-IX biosynthesis; 5-aminolevulinate from L-glutamyl-tRNA(Glu): step 1/2. In terms of biological role, catalyzes the NADPH-dependent reduction of glutamyl-tRNA(Glu) to glutamate 1-semialdehyde (GSA). This is Glutamyl-tRNA reductase from Pyrobaculum aerophilum (strain ATCC 51768 / DSM 7523 / JCM 9630 / CIP 104966 / NBRC 100827 / IM2).